A 272-amino-acid polypeptide reads, in one-letter code: Putative phosphoenolpyruvate synthase regulatory protein (272 aa).

152–159 contributes to the ADP binding site; sequence GVSRCGKT.

This sequence belongs to the pyruvate, phosphate/water dikinase regulatory protein family. PSRP subfamily.

The enzyme catalyses [pyruvate, water dikinase] + ADP = [pyruvate, water dikinase]-phosphate + AMP + H(+). It catalyses the reaction [pyruvate, water dikinase]-phosphate + phosphate + H(+) = [pyruvate, water dikinase] + diphosphate. Its function is as follows. Bifunctional serine/threonine kinase and phosphorylase involved in the regulation of the phosphoenolpyruvate synthase (PEPS) by catalyzing its phosphorylation/dephosphorylation. The protein is Putative phosphoenolpyruvate synthase regulatory protein of Ectopseudomonas mendocina (strain ymp) (Pseudomonas mendocina).